The chain runs to 285 residues: Phosphatidylserine decarboxylase proenzyme (285 aa).

Active-site charge relay system; for autoendoproteolytic cleavage activity residues include aspartate 96, histidine 152, and serine 250. Serine 250 acts as the Schiff-base intermediate with substrate; via pyruvic acid; for decarboxylase activity in catalysis. Serine 250 carries the post-translational modification Pyruvic acid (Ser); by autocatalysis.

It belongs to the phosphatidylserine decarboxylase family. PSD-B subfamily. Prokaryotic type I sub-subfamily. In terms of assembly, heterodimer of a large membrane-associated beta subunit and a small pyruvoyl-containing alpha subunit. It depends on pyruvate as a cofactor. Is synthesized initially as an inactive proenzyme. Formation of the active enzyme involves a self-maturation process in which the active site pyruvoyl group is generated from an internal serine residue via an autocatalytic post-translational modification. Two non-identical subunits are generated from the proenzyme in this reaction, and the pyruvate is formed at the N-terminus of the alpha chain, which is derived from the carboxyl end of the proenzyme. The autoendoproteolytic cleavage occurs by a canonical serine protease mechanism, in which the side chain hydroxyl group of the serine supplies its oxygen atom to form the C-terminus of the beta chain, while the remainder of the serine residue undergoes an oxidative deamination to produce ammonia and the pyruvoyl prosthetic group on the alpha chain. During this reaction, the Ser that is part of the protease active site of the proenzyme becomes the pyruvoyl prosthetic group, which constitutes an essential element of the active site of the mature decarboxylase.

The protein resides in the cell membrane. It catalyses the reaction a 1,2-diacyl-sn-glycero-3-phospho-L-serine + H(+) = a 1,2-diacyl-sn-glycero-3-phosphoethanolamine + CO2. It functions in the pathway phospholipid metabolism; phosphatidylethanolamine biosynthesis; phosphatidylethanolamine from CDP-diacylglycerol: step 2/2. Functionally, catalyzes the formation of phosphatidylethanolamine (PtdEtn) from phosphatidylserine (PtdSer). The chain is Phosphatidylserine decarboxylase proenzyme from Acinetobacter baylyi (strain ATCC 33305 / BD413 / ADP1).